The primary structure comprises 420 residues: UDP-N-acetylglucosamine 1-carboxyvinyltransferase (420 aa).

Lys-22–Asn-23 serves as a coordination point for phosphoenolpyruvate. Arg-91 is a binding site for UDP-N-acetyl-alpha-D-glucosamine. The Proton donor role is filled by Cys-115. Cys-115 carries the 2-(S-cysteinyl)pyruvic acid O-phosphothioketal modification. Residues Arg-120–Leu-124, Lys-160–Val-163, Asp-305, and Ile-327 each bind UDP-N-acetyl-alpha-D-glucosamine.

Belongs to the EPSP synthase family. MurA subfamily.

It localises to the cytoplasm. It catalyses the reaction phosphoenolpyruvate + UDP-N-acetyl-alpha-D-glucosamine = UDP-N-acetyl-3-O-(1-carboxyvinyl)-alpha-D-glucosamine + phosphate. It participates in cell wall biogenesis; peptidoglycan biosynthesis. Its function is as follows. Cell wall formation. Adds enolpyruvyl to UDP-N-acetylglucosamine. The protein is UDP-N-acetylglucosamine 1-carboxyvinyltransferase of Pectobacterium carotovorum subsp. carotovorum (strain PC1).